The primary structure comprises 108 residues: Tubulin-specific chaperone A (108 aa).

N-acetylalanine is present on Ala2.

It belongs to the TBCA family. Supercomplex made of cofactors A to E. Cofactors A and D function by capturing and stabilizing tubulin in a quasi-native conformation. Cofactor E binds to the cofactor D-tubulin complex; interaction with cofactor C then causes the release of tubulin polypeptides that are committed to the native state.

Its subcellular location is the cytoplasm. It is found in the cytoskeleton. In terms of biological role, tubulin-folding protein; involved in the early step of the tubulin folding pathway. This Gallus gallus (Chicken) protein is Tubulin-specific chaperone A (TBCA).